The chain runs to 313 residues: Cadmium, cobalt and zinc/H(+)-K(+) antiporter (313 aa).

Residues 1 to 14 (MGHNHNHAGGSNKK) are Extracellular-facing. The chain crosses the membrane as a helical span at residues 15–35 (VLLISFIMITGYMIIEAIGGF). Residues 36–45 (LTNSLALLSD) lie on the Cytoplasmic side of the membrane. The helical transmembrane segment at 46–66 (AGHMLSDSISLMVALIAFKLA) threads the bilayer. The Extracellular segment spans residues 67 to 80 (EKKASHHKTFGYKR). The chain crosses the membrane as a helical span at residues 81-101 (FEILAAVINGVALILISLYII). Residues 102–117 (YEAIKRFSHPPEVATT) lie on the Cytoplasmic side of the membrane. A helical transmembrane segment spans residues 118–138 (GMLTISIIGLAVNILVAWIML). Over 139 to 159 (NGGDTKNNLNIRGAYLHVISD) the chain is Extracellular. A helical membrane pass occupies residues 160 to 180 (MLGSIGAILAAILIIFFGWSW). The Cytoplasmic segment spans residues 181-313 (ADPAASVIVA…TENPRDHHHH (133 aa)).

The protein belongs to the cation diffusion facilitator (CDF) transporter (TC 2.A.4) family. SLC30A subfamily.

It is found in the cell membrane. Involved in divalent cation and potassium homeostasis in the cell. Catalyzes the active efflux of zinc, cadmium and cobalt, in exchange for potassium and H(+) ions. In Bacillus velezensis (strain DSM 23117 / BGSC 10A6 / LMG 26770 / FZB42) (Bacillus amyloliquefaciens subsp. plantarum), this protein is Cadmium, cobalt and zinc/H(+)-K(+) antiporter (czcD).